Reading from the N-terminus, the 572-residue chain is Moesin (572 aa).

The 294-residue stretch at 1–294 (MPRGVAVRVT…GNHELYMRRR (294 aa)) folds into the FERM domain. 2 disordered regions span residues 444-508 (SQER…SYLP) and 523-544 (LQAMKDESKGEDRYDKIHQENI). The span at 454–475 (AQEAAAAQHAAQLAAQREAQQL) shows a compositional bias: low complexity. The span at 480–502 (EGEEDEQDHELEVQQDDNDDLDD) shows a compositional bias: acidic residues. Residues 525–544 (AMKDESKGEDRYDKIHQENI) show a composition bias toward basic and acidic residues.

Its subcellular location is the cell membrane. The protein localises to the cytoplasm. The protein resides in the cytoskeleton. It localises to the cell projection. In terms of biological role, probably involved in connections of major cytoskeletal structures to the plasma membrane. The protein is Moesin of Lytechinus variegatus (Green sea urchin).